Reading from the N-terminus, the 488-residue chain is 6-phosphogluconate dehydrogenase, decarboxylating (488 aa).

NADP(+) is bound by residues 9–14 (GLAVMG), 32–34 (NRT), 74–76 (VKA), and asparagine 102. Substrate-binding positions include asparagine 102 and 128–130 (SGG). The active-site Proton acceptor is lysine 183. 186–187 (HN) is a substrate binding site. Glutamate 190 (proton donor) is an active-site residue. Substrate contacts are provided by tyrosine 191, lysine 260, arginine 287, arginine 451, and histidine 457.

The protein belongs to the 6-phosphogluconate dehydrogenase family. In terms of assembly, homodimer.

The catalysed reaction is 6-phospho-D-gluconate + NADP(+) = D-ribulose 5-phosphate + CO2 + NADPH. It functions in the pathway carbohydrate degradation; pentose phosphate pathway; D-ribulose 5-phosphate from D-glucose 6-phosphate (oxidative stage): step 3/3. Functionally, catalyzes the oxidative decarboxylation of 6-phosphogluconate to ribulose 5-phosphate and CO(2), with concomitant reduction of NADP to NADPH. This chain is 6-phosphogluconate dehydrogenase, decarboxylating (gnd), found in Treponema pallidum (strain Nichols).